Here is a 440-residue protein sequence, read N- to C-terminus: MTELDSLWEAIQNSFRQDTTPVTFDTLIAPAKAISLSQNQLEIEVPTPVHRDFWRKNLNTQLKEFAQRELGRNIEPHYVLEGEFTYTNKKTEDDPTPSFEMDTPLNPHYNFGTFVVGEGNKMAHAAAFAVAESPGSLYNPLFIYGGVGLGKTHLMEAIGNHMLQVNPNSRVKYVTSEDFTNDYINAIRNNTTEQLREEYRNLDLLLIDDIQFLANKEGTQLEFFNTFNALHDRKKQIVMTSDRIPNEIPELQDRLVSRFRWGLTVEITPPDLETRIAILRSKVEEDHIDIGNDTLNYIAGQIDTNIRELEGALTKVQAFANLSGERITPSLASQALKGLHRVAKNEISIATIQKQVADFYNITQGDILGKKRVKQIVMPRQIAMYLSRELTDSSLPKIGNEFGGKDHTTVLHAIDKIETELKKDTDLQNDITKLKAKLRS.

Positions Met1 to Arg72 are domain I, interacts with DnaA modulators. A domain II region spans residues Arg72–Thr103. The segment at Pro104–Ala320 is domain III, AAA+ region. ATP contacts are provided by Gly148, Gly150, Lys151, and Thr152. The tract at residues Asn321 to Ser440 is domain IV, binds dsDNA.

This sequence belongs to the DnaA family. Oligomerizes as a right-handed, spiral filament on DNA at oriC.

Its subcellular location is the cytoplasm. Functionally, plays an essential role in the initiation and regulation of chromosomal replication. ATP-DnaA binds to the origin of replication (oriC) to initiate formation of the DNA replication initiation complex once per cell cycle. Binds the DnaA box (a 9 base pair repeat at the origin) and separates the double-stranded (ds)DNA. Forms a right-handed helical filament on oriC DNA; dsDNA binds to the exterior of the filament while single-stranded (ss)DNA is stabiized in the filament's interior. The ATP-DnaA-oriC complex binds and stabilizes one strand of the AT-rich DNA unwinding element (DUE), permitting loading of DNA polymerase. After initiation quickly degrades to an ADP-DnaA complex that is not apt for DNA replication. Binds acidic phospholipids. In Limosilactobacillus reuteri (strain DSM 20016) (Lactobacillus reuteri), this protein is Chromosomal replication initiator protein DnaA.